We begin with the raw amino-acid sequence, 633 residues long: Molybdenum cofactor biosynthesis protein 1 (633 aa).

Positions 1-380 are molybdenum cofactor biosynthesis protein A; that stretch reads MAAQPVSRVV…QMKNRPMILI (380 aa). Ser61 is modified (phosphoserine). The region spanning 61–295 is the Radical SAM core domain; it reads SFGRHHSYLR…AKAFKIPGFR (235 aa). GTP is bound at residue Arg70. The [4Fe-4S] cluster site is built by Cys77 and Cys81. Residue Tyr83 coordinates S-adenosyl-L-methionine. Cys84 serves as a coordination point for [4Fe-4S] cluster. Arg120 is a GTP binding site. An S-adenosyl-L-methionine-binding site is contributed by Gly124. Thr151 lines the GTP pocket. Residue Ser175 participates in S-adenosyl-L-methionine binding. Position 195 is an N6-acetyllysine (Lys195). Lys212 provides a ligand contact to GTP. Met246 serves as a coordination point for S-adenosyl-L-methionine. The [4Fe-4S] cluster site is built by Cys309 and Cys312. 314–316 provides a ligand contact to GTP; sequence RLR. Residue Cys326 participates in [4Fe-4S] cluster binding. Positions 410 to 633 are molybdenum cofactor biosynthesis protein C; that stretch reads VSFSSQMVTL…GGQRGDFHRT (224 aa). The disordered stretch occupies residues 446-480; sequence SSHLDSDANPKCLSPTEPQAPAASSGPLPDSDQLT. An N6-acetyllysine modification is found at Lys525. Asp603 acts as the For molybdenum cofactor biosynthesis protein C activity in catalysis.

This sequence in the C-terminal section; belongs to the MoaC family. In the N-terminal section; belongs to the radical SAM superfamily. MoaA family. In terms of assembly, isoform MOCS1A and isoform MOCS1B probably form a heterooligomer. The cofactor is [4Fe-4S] cluster.

It carries out the reaction GTP + AH2 + S-adenosyl-L-methionine = (8S)-3',8-cyclo-7,8-dihydroguanosine 5'-triphosphate + 5'-deoxyadenosine + L-methionine + A + H(+). It catalyses the reaction (8S)-3',8-cyclo-7,8-dihydroguanosine 5'-triphosphate = cyclic pyranopterin phosphate + diphosphate. Its pathway is cofactor biosynthesis; molybdopterin biosynthesis. Isoform MOCS1A and isoform MOCS1B probably form a complex that catalyzes the conversion of 5'-GTP to cyclic pyranopterin monophosphate (cPMP). MOCS1A catalyzes the cyclization of GTP to (8S)-3',8-cyclo-7,8-dihydroguanosine 5'-triphosphate and MOCS1B catalyzes the subsequent conversion of (8S)-3',8-cyclo-7,8-dihydroguanosine 5'-triphosphate to cPMP. The chain is Molybdenum cofactor biosynthesis protein 1 (MOCS1) from Bos taurus (Bovine).